Reading from the N-terminus, the 425-residue chain is Serine--tRNA ligase (425 aa).

Positions 41 to 70 are disordered; the sequence is TERSQLQARSNQVGKQVGEKIKSGSDPKGT. Residues 44 to 54 are compositionally biased toward polar residues; that stretch reads SQLQARSNQVG. Basic and acidic residues predominate over residues 57-70; the sequence is VGEKIKSGSDPKGT. 234–236 contributes to the L-serine binding site; sequence TSE. Residue 265–267 coordinates ATP; it reads RRE. Glutamate 288 provides a ligand contact to L-serine. 352–355 contributes to the ATP binding site; it reads EISS. Serine 388 is an L-serine binding site.

This sequence belongs to the class-II aminoacyl-tRNA synthetase family. Type-1 seryl-tRNA synthetase subfamily. Homodimer. The tRNA molecule binds across the dimer.

The protein localises to the cytoplasm. The enzyme catalyses tRNA(Ser) + L-serine + ATP = L-seryl-tRNA(Ser) + AMP + diphosphate + H(+). It carries out the reaction tRNA(Sec) + L-serine + ATP = L-seryl-tRNA(Sec) + AMP + diphosphate + H(+). The protein operates within aminoacyl-tRNA biosynthesis; selenocysteinyl-tRNA(Sec) biosynthesis; L-seryl-tRNA(Sec) from L-serine and tRNA(Sec): step 1/1. Catalyzes the attachment of serine to tRNA(Ser). Is also able to aminoacylate tRNA(Sec) with serine, to form the misacylated tRNA L-seryl-tRNA(Sec), which will be further converted into selenocysteinyl-tRNA(Sec). The polypeptide is Serine--tRNA ligase (Trichodesmium erythraeum (strain IMS101)).